We begin with the raw amino-acid sequence, 207 residues long: Large ribosomal subunit protein uL4 (207 aa).

It belongs to the universal ribosomal protein uL4 family. Part of the 50S ribosomal subunit.

Its function is as follows. One of the primary rRNA binding proteins, this protein initially binds near the 5'-end of the 23S rRNA. It is important during the early stages of 50S assembly. It makes multiple contacts with different domains of the 23S rRNA in the assembled 50S subunit and ribosome. Functionally, forms part of the polypeptide exit tunnel. In Rickettsia rickettsii (strain Iowa), this protein is Large ribosomal subunit protein uL4.